Reading from the N-terminus, the 467-residue chain is 3-isopropylmalate dehydratase large subunit (467 aa).

[4Fe-4S] cluster is bound by residues cysteine 348, cysteine 409, and cysteine 412. A disordered region spans residues 423-449; it reads NERSISTSNRNFEGRQGKGSRTHLASP.

This sequence belongs to the aconitase/IPM isomerase family. LeuC type 1 subfamily. As to quaternary structure, heterodimer of LeuC and LeuD. [4Fe-4S] cluster is required as a cofactor.

It catalyses the reaction (2R,3S)-3-isopropylmalate = (2S)-2-isopropylmalate. Its pathway is amino-acid biosynthesis; L-leucine biosynthesis; L-leucine from 3-methyl-2-oxobutanoate: step 2/4. In terms of biological role, catalyzes the isomerization between 2-isopropylmalate and 3-isopropylmalate, via the formation of 2-isopropylmaleate. This is 3-isopropylmalate dehydratase large subunit from Bifidobacterium longum subsp. infantis (strain ATCC 15697 / DSM 20088 / JCM 1222 / NCTC 11817 / S12).